Here is a 312-residue protein sequence, read N- to C-terminus: Ribosomal protein L11 methyltransferase (312 aa).

S-adenosyl-L-methionine-binding residues include T164, G185, D207, and N249.

Belongs to the methyltransferase superfamily. PrmA family.

The protein localises to the cytoplasm. It catalyses the reaction L-lysyl-[protein] + 3 S-adenosyl-L-methionine = N(6),N(6),N(6)-trimethyl-L-lysyl-[protein] + 3 S-adenosyl-L-homocysteine + 3 H(+). In terms of biological role, methylates ribosomal protein L11. The protein is Ribosomal protein L11 methyltransferase of Clostridium novyi (strain NT).